A 331-amino-acid chain; its full sequence is UPF0324 membrane protein SAS0317 (331 aa).

The next 11 membrane-spanning stretches (helical) occupy residues 9-26, 31-48, 69-88, 93-115, 122-144, 154-176, 183-202, 217-234, 247-269, 273-295, and 308-330; these read FMIGLTLTFIVALFSFLA, ILDKVGALTIAILIAILY, LLRFAIILYGLKLNIFDIIG, LLAIDVGVVIFSIVMMLFVNKLL, ALLLGVGTGVCGAAAIAAVAPIF, SIGIIALIGTIFSLIYTAIYAIF, YGAWSGVSLHEIAHVVLAGG, LGRVFLLIPLTIVLILIM, ISIPYFLIGFVIMALVNTYVTIP, LNILNTVSTICLLMAMVALGLNV, and LMTIIITSICLSSLAFIVVHWLY.

This sequence belongs to the UPF0324 family.

The protein resides in the cell membrane. The sequence is that of UPF0324 membrane protein SAS0317 from Staphylococcus aureus (strain MSSA476).